Reading from the N-terminus, the 401-residue chain is Ufm1-specific protease 2 (401 aa).

Active-site residues include C234, D358, and H360.

The protein belongs to the peptidase C78 family.

It is found in the endoplasmic reticulum. The protein localises to the cytoplasm. Its subcellular location is the nucleus. In terms of biological role, thiol-dependent isopeptidase that specifically cleaves UFM1, a ubiquitin-like modifier protein, from conjugated proteins. While it is also able to mediate the processing of UFM1 precursors, a prerequisite for conjugation reactions, ufsp2 mainly acts as a protein deUFMylase that mediates deconjugation of UFM1 from target proteins. The sequence is that of Ufm1-specific protease 2 from Danio rerio (Zebrafish).